Consider the following 448-residue polypeptide: Exodeoxyribonuclease 7 large subunit (448 aa).

Belongs to the XseA family. Heterooligomer composed of large and small subunits.

The protein localises to the cytoplasm. The enzyme catalyses Exonucleolytic cleavage in either 5'- to 3'- or 3'- to 5'-direction to yield nucleoside 5'-phosphates.. In terms of biological role, bidirectionally degrades single-stranded DNA into large acid-insoluble oligonucleotides, which are then degraded further into small acid-soluble oligonucleotides. This is Exodeoxyribonuclease 7 large subunit from Exiguobacterium sp. (strain ATCC BAA-1283 / AT1b).